The primary structure comprises 148 residues: Lipoprotein signal peptidase (148 aa).

A run of 2 helical transmembrane segments spans residues glutamine 57–threonine 77 and valine 80–isoleucine 100. Catalysis depends on residues aspartate 110 and aspartate 126. Residues isoleucine 124 to glutamate 144 form a helical membrane-spanning segment.

This sequence belongs to the peptidase A8 family.

The protein localises to the cell membrane. The catalysed reaction is Release of signal peptides from bacterial membrane prolipoproteins. Hydrolyzes -Xaa-Yaa-Zaa-|-(S,diacylglyceryl)Cys-, in which Xaa is hydrophobic (preferably Leu), and Yaa (Ala or Ser) and Zaa (Gly or Ala) have small, neutral side chains.. It participates in protein modification; lipoprotein biosynthesis (signal peptide cleavage). Functionally, this protein specifically catalyzes the removal of signal peptides from prolipoproteins. This is Lipoprotein signal peptidase from Clostridioides difficile (strain 630) (Peptoclostridium difficile).